A 576-amino-acid chain; its full sequence is Arginine--tRNA ligase (576 aa).

The 'HIGH' region motif lies at 122–132; that stretch reads PNVAKEMHVGH.

It belongs to the class-I aminoacyl-tRNA synthetase family. In terms of assembly, monomer.

Its subcellular location is the cytoplasm. The enzyme catalyses tRNA(Arg) + L-arginine + ATP = L-arginyl-tRNA(Arg) + AMP + diphosphate. This is Arginine--tRNA ligase from Pectobacterium carotovorum subsp. carotovorum (strain PC1).